Consider the following 357-residue polypeptide: 3-isopropylmalate dehydrogenase (357 aa).

Arg97, Arg107, Arg135, and Asp224 together coordinate substrate. Asp224, Asp248, and Asp252 together coordinate Mg(2+). Gly282–Asn294 lines the NAD(+) pocket.

Belongs to the isocitrate and isopropylmalate dehydrogenases family. LeuB type 1 subfamily. Homodimer. The cofactor is Mg(2+). Mn(2+) serves as cofactor.

Its subcellular location is the cytoplasm. It catalyses the reaction (2R,3S)-3-isopropylmalate + NAD(+) = 4-methyl-2-oxopentanoate + CO2 + NADH. It participates in amino-acid biosynthesis; L-leucine biosynthesis; L-leucine from 3-methyl-2-oxobutanoate: step 3/4. Catalyzes the oxidation of 3-carboxy-2-hydroxy-4-methylpentanoate (3-isopropylmalate) to 3-carboxy-4-methyl-2-oxopentanoate. The product decarboxylates to 4-methyl-2 oxopentanoate. This is 3-isopropylmalate dehydrogenase from Synechococcus sp. (strain CC9902).